Reading from the N-terminus, the 484-residue chain is Protein nucleotidyltransferase YdiU (484 aa).

8 residues coordinate ATP: G81, G83, R84, K103, D115, G116, R166, and R173. D244 serves as the catalytic Proton acceptor. Positions 245 and 254 each coordinate Mg(2+). D254 is an ATP binding site.

The protein belongs to the SELO family. Mg(2+) serves as cofactor. Requires Mn(2+) as cofactor.

The enzyme catalyses L-seryl-[protein] + ATP = 3-O-(5'-adenylyl)-L-seryl-[protein] + diphosphate. It catalyses the reaction L-threonyl-[protein] + ATP = 3-O-(5'-adenylyl)-L-threonyl-[protein] + diphosphate. It carries out the reaction L-tyrosyl-[protein] + ATP = O-(5'-adenylyl)-L-tyrosyl-[protein] + diphosphate. The catalysed reaction is L-histidyl-[protein] + UTP = N(tele)-(5'-uridylyl)-L-histidyl-[protein] + diphosphate. The enzyme catalyses L-seryl-[protein] + UTP = O-(5'-uridylyl)-L-seryl-[protein] + diphosphate. It catalyses the reaction L-tyrosyl-[protein] + UTP = O-(5'-uridylyl)-L-tyrosyl-[protein] + diphosphate. In terms of biological role, nucleotidyltransferase involved in the post-translational modification of proteins. It can catalyze the addition of adenosine monophosphate (AMP) or uridine monophosphate (UMP) to a protein, resulting in modifications known as AMPylation and UMPylation. In Shewanella baltica (strain OS155 / ATCC BAA-1091), this protein is Protein nucleotidyltransferase YdiU.